A 475-amino-acid chain; its full sequence is Arginine biosynthesis bifunctional protein ArgJ 1, mitochondrial (475 aa).

Residues Thr-204, Lys-233, Thr-244, Glu-331, Asn-470, and Thr-475 each coordinate substrate. Thr-244 (nucleophile) is an active-site residue.

The protein belongs to the ArgJ family. As to quaternary structure, heterodimer of an alpha and a beta chain. In terms of processing, the alpha and beta chains are autoproteolytically processed from a single precursor protein within the mitochondrion.

It localises to the mitochondrion matrix. The enzyme catalyses N(2)-acetyl-L-ornithine + L-glutamate = N-acetyl-L-glutamate + L-ornithine. It catalyses the reaction L-glutamate + acetyl-CoA = N-acetyl-L-glutamate + CoA + H(+). It functions in the pathway amino-acid biosynthesis; L-arginine biosynthesis; L-ornithine and N-acetyl-L-glutamate from L-glutamate and N(2)-acetyl-L-ornithine (cyclic): step 1/1. Its pathway is amino-acid biosynthesis; L-arginine biosynthesis; N(2)-acetyl-L-ornithine from L-glutamate: step 1/4. Catalyzes two activities which are involved in the cyclic version of arginine biosynthesis: the synthesis of acetylglutamate from glutamate and acetyl-CoA, and of ornithine by transacetylation between acetylornithine and glutamate. In Botryotinia fuckeliana (strain B05.10) (Noble rot fungus), this protein is Arginine biosynthesis bifunctional protein ArgJ 1, mitochondrial.